Here is a 221-residue protein sequence, read N- to C-terminus: Putative N-acetylmannosamine-6-phosphate 2-epimerase (221 aa).

Belongs to the NanE family.

The catalysed reaction is an N-acyl-D-glucosamine 6-phosphate = an N-acyl-D-mannosamine 6-phosphate. It functions in the pathway amino-sugar metabolism; N-acetylneuraminate degradation; D-fructose 6-phosphate from N-acetylneuraminate: step 3/5. Functionally, converts N-acetylmannosamine-6-phosphate (ManNAc-6-P) to N-acetylglucosamine-6-phosphate (GlcNAc-6-P). This is Putative N-acetylmannosamine-6-phosphate 2-epimerase from Clostridium perfringens (strain ATCC 13124 / DSM 756 / JCM 1290 / NCIMB 6125 / NCTC 8237 / Type A).